Reading from the N-terminus, the 195-residue chain is Imidazoleglycerol-phosphate dehydratase (195 aa).

Belongs to the imidazoleglycerol-phosphate dehydratase family.

It localises to the cytoplasm. It carries out the reaction D-erythro-1-(imidazol-4-yl)glycerol 3-phosphate = 3-(imidazol-4-yl)-2-oxopropyl phosphate + H2O. The protein operates within amino-acid biosynthesis; L-histidine biosynthesis; L-histidine from 5-phospho-alpha-D-ribose 1-diphosphate: step 6/9. This chain is Imidazoleglycerol-phosphate dehydratase, found in Polynucleobacter necessarius subsp. necessarius (strain STIR1).